Here is a 1358-residue protein sequence, read N- to C-terminus: Phosphoribosylformylglycinamidine synthase (1358 aa).

Thr-2 bears the N-acetylthreonine mark. The interval 339–363 is disordered; sequence AVSPFPGAATGSGGEIRDEGATGRG. ATP contacts are provided by residues 345 to 356, 424 to 426, and Ala-719; these read GAATGSGGEIRD and NGY. Residues Asp-720, Glu-762, Asn-766, and Asp-930 each coordinate Mg(2+). Ser-932 contributes to the ATP binding site. One can recognise a Glutamine amidotransferase type-1 domain in the interval 1093–1358; the sequence is VAILREQGVN…LFRSARRWVG (266 aa). Cys-1187 serves as the catalytic Nucleophile. Catalysis depends on residues His-1319 and Glu-1321.

This sequence in the N-terminal section; belongs to the FGAMS family.

It localises to the cytoplasm. It catalyses the reaction N(2)-formyl-N(1)-(5-phospho-beta-D-ribosyl)glycinamide + L-glutamine + ATP + H2O = 2-formamido-N(1)-(5-O-phospho-beta-D-ribosyl)acetamidine + L-glutamate + ADP + phosphate + H(+). It functions in the pathway purine metabolism; IMP biosynthesis via de novo pathway; 5-amino-1-(5-phospho-D-ribosyl)imidazole from N(2)-formyl-N(1)-(5-phospho-D-ribosyl)glycinamide: step 1/2. In terms of biological role, phosphoribosylformylglycinamidine synthase involved in the purines biosynthetic pathway. Catalyzes the ATP-dependent conversion of formylglycinamide ribonucleotide (FGAR) and glutamine to yield formylglycinamidine ribonucleotide (FGAM) and glutamate. The polypeptide is Phosphoribosylformylglycinamidine synthase (ADE6) (Saccharomyces cerevisiae (strain ATCC 204508 / S288c) (Baker's yeast)).